The primary structure comprises 451 residues: Probable tyrosyl-DNA phosphodiesterase (451 aa).

The tract at residues 1–34 (MKRTIQETPGPSSTTVPPPKKLNSQRNGSNLEPG) is disordered. Positions 22 to 32 (LNSQRNGSNLE) are enriched in polar residues. The Nucleophile role is filled by histidine 131. Lysine 133 is a substrate binding site. The interval 266–269 (SIGS) is interaction with DNA. The active-site Proton donor/acceptor is the histidine 356. A substrate-binding site is contributed by lysine 358.

Belongs to the tyrosyl-DNA phosphodiesterase family.

The protein localises to the nucleus. In terms of biological role, DNA repair enzyme that can remove a variety of covalent adducts from DNA through hydrolysis of a 3'-phosphodiester bond, giving rise to DNA with a free 3' phosphate. Catalyzes the hydrolysis of dead-end complexes between DNA and the topoisomerase I active site tyrosine residue. Hydrolyzes 3'-phosphoglycolates on protruding 3' ends on DNA double-strand breaks due to DNA damage by radiation and free radicals. Acts on blunt-ended double-strand DNA breaks and on single-stranded DNA. May have low 3'exonuclease activity and may be able to remove a single nucleoside from the 3'end of DNA and RNA molecules with 3'hydroxyl groups. Has no exonuclease activity towards DNA or RNA with a 3'phosphate. The sequence is that of Probable tyrosyl-DNA phosphodiesterase from Caenorhabditis elegans.